A 752-amino-acid polypeptide reads, in one-letter code: Multifunctional tryptophan biosynthesis protein (752 aa).

The Glutamine amidotransferase type-1 domain occupies 3-202; sequence FTLLIDNYDS…IQMKGGKWGG (200 aa). 58 to 60 lines the L-glutamine pocket; sequence GPG. Cys-86 acts as the Nucleophile; for GATase activity in catalysis. An L-glutamine-binding site is contributed by 136 to 137; that stretch reads SL. Catalysis depends on for GATase activity residues His-176 and Glu-178. The indole-3-glycerol phosphate synthase stretch occupies residues 231–495; the sequence is ILNRIHAQRL…DTKAFLRSLI (265 aa). Positions 509–752 are N-(5'-phosphoribosyl)anthranilate isomerase; that stretch reads LVKICGIRST…VEAFVKAVRG (244 aa).

The enzyme catalyses N-(5-phospho-beta-D-ribosyl)anthranilate = 1-(2-carboxyphenylamino)-1-deoxy-D-ribulose 5-phosphate. It catalyses the reaction 1-(2-carboxyphenylamino)-1-deoxy-D-ribulose 5-phosphate + H(+) = (1S,2R)-1-C-(indol-3-yl)glycerol 3-phosphate + CO2 + H2O. The catalysed reaction is chorismate + L-glutamine = anthranilate + pyruvate + L-glutamate + H(+). The protein operates within amino-acid biosynthesis; L-tryptophan biosynthesis; L-tryptophan from chorismate: step 1/5. Its pathway is amino-acid biosynthesis; L-tryptophan biosynthesis; L-tryptophan from chorismate: step 3/5. It participates in amino-acid biosynthesis; L-tryptophan biosynthesis; L-tryptophan from chorismate: step 4/5. Trifunctional enzyme bearing the Gln amidotransferase (GATase) domain of anthranilate synthase, indole-glycerolphosphate synthase, and phosphoribosylanthranilate isomerase activities. The polypeptide is Multifunctional tryptophan biosynthesis protein (TRP1) (Cryptococcus neoformans var. neoformans serotype D (strain B-3501A) (Filobasidiella neoformans)).